Here is a 467-residue protein sequence, read N- to C-terminus: 3-isopropylmalate dehydratase large subunit (467 aa).

[4Fe-4S] cluster is bound by residues cysteine 347, cysteine 407, and cysteine 410.

The protein belongs to the aconitase/IPM isomerase family. LeuC type 1 subfamily. As to quaternary structure, heterodimer of LeuC and LeuD. [4Fe-4S] cluster is required as a cofactor.

The enzyme catalyses (2R,3S)-3-isopropylmalate = (2S)-2-isopropylmalate. It participates in amino-acid biosynthesis; L-leucine biosynthesis; L-leucine from 3-methyl-2-oxobutanoate: step 2/4. In terms of biological role, catalyzes the isomerization between 2-isopropylmalate and 3-isopropylmalate, via the formation of 2-isopropylmaleate. The sequence is that of 3-isopropylmalate dehydratase large subunit from Gloeothece citriformis (strain PCC 7424) (Cyanothece sp. (strain PCC 7424)).